The following is a 299-amino-acid chain: Oxygen-dependent coproporphyrinogen-III oxidase (299 aa).

Serine 92 lines the substrate pocket. A divalent metal cation-binding residues include histidine 96 and histidine 106. The Proton donor role is filled by histidine 106. 108–110 contributes to the substrate binding site; the sequence is NVR. A divalent metal cation-binding residues include histidine 145 and histidine 175. An important for dimerization region spans residues 239 to 274; sequence YVEFNLVYDRGTLFGLQSGGRAESILMSLPPRVRWE. Residue 257–259 participates in substrate binding; sequence GGR.

The protein belongs to the aerobic coproporphyrinogen-III oxidase family. In terms of assembly, homodimer. Requires a divalent metal cation as cofactor.

It localises to the cytoplasm. The enzyme catalyses coproporphyrinogen III + O2 + 2 H(+) = protoporphyrinogen IX + 2 CO2 + 2 H2O. The protein operates within porphyrin-containing compound metabolism; protoporphyrin-IX biosynthesis; protoporphyrinogen-IX from coproporphyrinogen-III (O2 route): step 1/1. Involved in the heme biosynthesis. Catalyzes the aerobic oxidative decarboxylation of propionate groups of rings A and B of coproporphyrinogen-III to yield the vinyl groups in protoporphyrinogen-IX. The protein is Oxygen-dependent coproporphyrinogen-III oxidase of Xanthomonas euvesicatoria pv. vesicatoria (strain 85-10) (Xanthomonas campestris pv. vesicatoria).